A 597-amino-acid polypeptide reads, in one-letter code: Plasmepsin V (597 aa).

The Lumenal portion of the chain corresponds to 1-551 (MNNYFLRKEN…EKENIFLKVS (551 aa)). A coiled-coil region spans residues 33–88 (CNNVENKIDNVGKKIENVGKKIGDMENKNDNVENKNDNVENKNDNVGNKNDNVKNA). Basic and acidic residues predominate over residues 58-75 (ENKNDNVENKNDNVENKN). Positions 58 to 83 (ENKNDNVENKNDNVENKNDNVGNKND) are disordered. One can recognise a Peptidase A1 domain in the interval 107-521 (YFLDIDIGKP…DLQQNQIAFI (415 aa)). Asp125 is an active-site residue. 7 disulfides stabilise this stretch: Cys135–Cys218, Cys138–Cys141, Cys162–Cys173, Cys167–Cys178, Cys266–Cys525, Cys396–Cys441, and Cys450–Cys486. Residues 289-298 (KEKQKMDKSD) are compositionally biased toward basic and acidic residues. Residues 289 to 323 (KEKQKMDKSDNNSSNKGNVSIKLKNNDKNDDEENN) are disordered. Positions 299–311 (NNSSNKGNVSIKL) are enriched in low complexity. Asp372 is an active-site residue. The chain crosses the membrane as a helical span at residues 552-572 (YINLYCLWLLLALTILLSLIL). Topologically, residues 573 to 597 (YVRKMFYMDYFPLSDQNKSPIQEST) are cytoplasmic.

It belongs to the peptidase A1 family. As to quaternary structure, component of a complex composed of SPC25 and PMV; the interaction is mediated via the transmembrane domains. The complex interacts with the SEC61 channel-forming translocon complex and is involved in the recognition and import of PEXEL motif-containing proteins into the ER for subsequent export. In terms of processing, it is not clear if the zymogen has a cleavable propeptide. In vitro, appears to be cleaved between Asn-87 and Ala-88. Cleavage of the putative propeptide is dispensable for catalytic activity.

The protein resides in the endoplasmic reticulum membrane. Functionally, during the asexual blood stage, plays an essential role in the export of several proteins into the host erythrocytes by cleaving the pentameric localization motif RxLxE/Q/D (termed Plasmodium export element (PEXEL)) located downstream of the N-terminal secretory signal sequence. Specifically, cleaves after the leucine residue in the RxLxE/Q/D (or RxLxxE) motif of exported proteins including RESA, EMP2, EMP3, KAHRP, RIF/Rifin and STEVOR. Also, by regulating protein export, plays an essential role in gametocyte development and thus parasite transmission to the mosquito vector. The chain is Plasmepsin V from Plasmodium falciparum (isolate HB3).